Reading from the N-terminus, the 601-residue chain is Sulfite reductase [NADPH] flavoprotein alpha-component (601 aa).

Positions 65-203 (ITIISASQTG…NYNKWSQDLL (139 aa)) constitute a Flavodoxin-like domain. FMN-binding positions include 71–76 (SQTGNA), 118–121 (STQG), and 154–163 (LGDTSYNLFC). One can recognise an FAD-binding FR-type domain in the interval 236–450 (KNPAEGIILT…IQTNDNFRLP (215 aa)). FAD contacts are provided by residues Thr324, Ile358, 388-391 (RLYS), 406-408 (TVG), and 421-424 (GGAS). NADP(+) is bound by residues 521–522 (SQ), 527–531 (KIYVQ), and Asp563. Tyr601 is an FAD binding site.

Belongs to the NADPH-dependent sulphite reductase flavoprotein subunit CysJ family. It in the N-terminal section; belongs to the flavodoxin family. The protein in the C-terminal section; belongs to the flavoprotein pyridine nucleotide cytochrome reductase family. As to quaternary structure, alpha(8)-beta(8). The alpha component is a flavoprotein, the beta component is a hemoprotein. It depends on FAD as a cofactor. The cofactor is FMN.

The enzyme catalyses hydrogen sulfide + 3 NADP(+) + 3 H2O = sulfite + 3 NADPH + 4 H(+). Its pathway is sulfur metabolism; hydrogen sulfide biosynthesis; hydrogen sulfide from sulfite (NADPH route): step 1/1. Component of the sulfite reductase complex that catalyzes the 6-electron reduction of sulfite to sulfide. This is one of several activities required for the biosynthesis of L-cysteine from sulfate. The flavoprotein component catalyzes the electron flow from NADPH -&gt; FAD -&gt; FMN to the hemoprotein component. The chain is Sulfite reductase [NADPH] flavoprotein alpha-component from Buchnera aphidicola subsp. Acyrthosiphon pisum (strain APS) (Acyrthosiphon pisum symbiotic bacterium).